A 435-amino-acid polypeptide reads, in one-letter code: 3-phosphoshikimate 1-carboxyvinyltransferase (435 aa).

3-phosphoshikimate-binding residues include Lys-22, Ser-23, and Arg-27. Lys-22 serves as a coordination point for phosphoenolpyruvate. The phosphoenolpyruvate site is built by Gly-94 and Arg-122. 3-phosphoshikimate contacts are provided by Ser-166, Gln-168, Asp-314, and Lys-341. A phosphoenolpyruvate-binding site is contributed by Gln-168. The active-site Proton acceptor is Asp-314. Positions 345 and 388 each coordinate phosphoenolpyruvate.

The protein belongs to the EPSP synthase family. As to quaternary structure, monomer.

It localises to the cytoplasm. It carries out the reaction 3-phosphoshikimate + phosphoenolpyruvate = 5-O-(1-carboxyvinyl)-3-phosphoshikimate + phosphate. The protein operates within metabolic intermediate biosynthesis; chorismate biosynthesis; chorismate from D-erythrose 4-phosphate and phosphoenolpyruvate: step 6/7. Its function is as follows. Catalyzes the transfer of the enolpyruvyl moiety of phosphoenolpyruvate (PEP) to the 5-hydroxyl of shikimate-3-phosphate (S3P) to produce enolpyruvyl shikimate-3-phosphate and inorganic phosphate. The chain is 3-phosphoshikimate 1-carboxyvinyltransferase from Vesicomyosocius okutanii subsp. Calyptogena okutanii (strain HA).